A 338-amino-acid chain; its full sequence is Phenylalanine--tRNA ligase alpha subunit (338 aa).

Glu252 is a binding site for Mg(2+).

The protein belongs to the class-II aminoacyl-tRNA synthetase family. Phe-tRNA synthetase alpha subunit type 1 subfamily. Tetramer of two alpha and two beta subunits. Mg(2+) serves as cofactor.

It is found in the cytoplasm. It carries out the reaction tRNA(Phe) + L-phenylalanine + ATP = L-phenylalanyl-tRNA(Phe) + AMP + diphosphate + H(+). The chain is Phenylalanine--tRNA ligase alpha subunit from Mycoplasmoides gallisepticum (strain R(low / passage 15 / clone 2)) (Mycoplasma gallisepticum).